Consider the following 193-residue polypeptide: dTTP/UTP pyrophosphatase (193 aa).

Asp71 serves as the catalytic Proton acceptor.

Belongs to the Maf family. YhdE subfamily. A divalent metal cation is required as a cofactor.

It is found in the cytoplasm. It carries out the reaction dTTP + H2O = dTMP + diphosphate + H(+). The enzyme catalyses UTP + H2O = UMP + diphosphate + H(+). Its function is as follows. Nucleoside triphosphate pyrophosphatase that hydrolyzes dTTP and UTP. May have a dual role in cell division arrest and in preventing the incorporation of modified nucleotides into cellular nucleic acids. This Dictyoglomus thermophilum (strain ATCC 35947 / DSM 3960 / H-6-12) protein is dTTP/UTP pyrophosphatase.